The primary structure comprises 398 residues: Nematocin receptor 2 (398 aa).

Residues Met-1 to Val-25 are Extracellular-facing. 2 N-linked (GlcNAc...) asparagine glycosylation sites follow: Asn-3 and Asn-7. The helical transmembrane segment at Tyr-26–Phe-46 threads the bilayer. Topologically, residues Arg-47 to Pro-58 are cytoplasmic. A helical membrane pass occupies residues Val-59–Gly-79. Topologically, residues Thr-80–Lys-99 are extracellular. A disulfide bond links Cys-98 and Cys-173. A helical transmembrane segment spans residues Leu-100–Ser-120. Over Ala-121–Asn-143 the chain is Cytoplasmic. The chain crosses the membrane as a helical span at residues Trp-144–Trp-164. The Extracellular portion of the chain corresponds to Thr-165–Thr-187. Residues Tyr-188–Tyr-208 form a helical membrane-spanning segment. Residues Tyr-209–Leu-271 lie on the Cytoplasmic side of the membrane. The helical transmembrane segment at Thr-272–Ile-292 threads the bilayer. The Extracellular portion of the chain corresponds to Gln-293–Ile-302. A helical membrane pass occupies residues Met-303–Leu-325. Over Phe-326–Asn-398 the chain is Cytoplasmic.

Belongs to the G-protein coupled receptor 1 family. Vasopressin/oxytocin receptor subfamily. As to expression, detected in the ADL sensory neurons, the RMED and RMEV motor neurons, and the PQR tail neuron. In males, detected in SPC tail neurons involved in spicule penetration and sperm transfer, and male-specific oblique muscles involved in vulval contact.

It localises to the cell membrane. Its function is as follows. Not directly activated by nematocin. May modulate activity of the nematocin receptor ntr-1, leading to reduced intracellular cAMP production. Plays a role in male mating behavior. In Caenorhabditis elegans, this protein is Nematocin receptor 2.